A 253-amino-acid chain; its full sequence is 2,3-bisphosphoglycerate-dependent phosphoglycerate mutase (253 aa).

Substrate-binding positions include 12 to 19 (RHGESEWN), 25 to 26 (TG), Arg-64, 91 to 94 (ERHY), Lys-102, 118 to 119 (RR), and 187 to 188 (GN). His-13 (tele-phosphohistidine intermediate) is an active-site residue. Glu-91 (proton donor/acceptor) is an active-site residue.

It belongs to the phosphoglycerate mutase family. BPG-dependent PGAM subfamily.

The enzyme catalyses (2R)-2-phosphoglycerate = (2R)-3-phosphoglycerate. It participates in carbohydrate degradation; glycolysis; pyruvate from D-glyceraldehyde 3-phosphate: step 3/5. Catalyzes the interconversion of 2-phosphoglycerate and 3-phosphoglycerate. This is 2,3-bisphosphoglycerate-dependent phosphoglycerate mutase from Streptomyces griseus subsp. griseus (strain JCM 4626 / CBS 651.72 / NBRC 13350 / KCC S-0626 / ISP 5235).